An 89-amino-acid chain; its full sequence is MPPCSATSRRSLPGPTPSARRWTVPWTRTARGLTGLCLLLSLTACATAPAPAVLCEHPLIDPTTQAGLIRAVAAYQDALDLCNALNQGD.

The segment covering 1–10 (MPPCSATSRR) has biased composition (polar residues). Residues 1–21 (MPPCSATSRRSLPGPTPSARR) are disordered. A signal peptide spans 1 to 47 (MPPCSATSRRSLPGPTPSARRWTVPWTRTARGLTGLCLLLSLTACAT).

In terms of assembly, interacts (via C-terminus) with the spanin inner membrane subunit (via C-terminus). Part of the spanin complex which spans the entire periplasmic space. The spanin complex is composed of spanin inner membrane subunit and spanin outer membrane subunit.

It is found in the host cell outer membrane. In terms of biological role, component of the spanin complex that disrupts the host outer membrane and participates in cell lysis during virus exit. The spanin complex conducts the final step in host lysis by disrupting the outer membrane after holin and endolysin action have permeabilized the inner membrane and degraded the host peptidoglycans. Host outer membrane disruption is possibly due to local fusion between the inner and outer membrane performed by the spanin complex. The protein is Probable spanin, outer lipoprotein subunit of Pseudomonas aeruginosa.